The chain runs to 286 residues: Phosphatidylserine decarboxylase proenzyme (286 aa).

Active-site charge relay system; for autoendoproteolytic cleavage activity residues include Asp88, His145, and Ser251. Catalysis depends on Ser251, which acts as the Schiff-base intermediate with substrate; via pyruvic acid; for decarboxylase activity. Position 251 is a pyruvic acid (Ser); by autocatalysis (Ser251).

This sequence belongs to the phosphatidylserine decarboxylase family. PSD-B subfamily. Prokaryotic type I sub-subfamily. Heterodimer of a large membrane-associated beta subunit and a small pyruvoyl-containing alpha subunit. Requires pyruvate as cofactor. Is synthesized initially as an inactive proenzyme. Formation of the active enzyme involves a self-maturation process in which the active site pyruvoyl group is generated from an internal serine residue via an autocatalytic post-translational modification. Two non-identical subunits are generated from the proenzyme in this reaction, and the pyruvate is formed at the N-terminus of the alpha chain, which is derived from the carboxyl end of the proenzyme. The autoendoproteolytic cleavage occurs by a canonical serine protease mechanism, in which the side chain hydroxyl group of the serine supplies its oxygen atom to form the C-terminus of the beta chain, while the remainder of the serine residue undergoes an oxidative deamination to produce ammonia and the pyruvoyl prosthetic group on the alpha chain. During this reaction, the Ser that is part of the protease active site of the proenzyme becomes the pyruvoyl prosthetic group, which constitutes an essential element of the active site of the mature decarboxylase.

It is found in the cell membrane. The enzyme catalyses a 1,2-diacyl-sn-glycero-3-phospho-L-serine + H(+) = a 1,2-diacyl-sn-glycero-3-phosphoethanolamine + CO2. The protein operates within phospholipid metabolism; phosphatidylethanolamine biosynthesis; phosphatidylethanolamine from CDP-diacylglycerol: step 2/2. In terms of biological role, catalyzes the formation of phosphatidylethanolamine (PtdEtn) from phosphatidylserine (PtdSer). The polypeptide is Phosphatidylserine decarboxylase proenzyme (Verminephrobacter eiseniae (strain EF01-2)).